Here is a 613-residue protein sequence, read N- to C-terminus: Isocitrate dehydrogenase kinase/phosphatase (613 aa).

ATP is bound by residues 328 to 334 (APGIRGL) and Lys349. Asp384 is an active-site residue.

It belongs to the AceK family.

It is found in the cytoplasm. The enzyme catalyses L-seryl-[isocitrate dehydrogenase] + ATP = O-phospho-L-seryl-[isocitrate dehydrogenase] + ADP + H(+). Bifunctional enzyme which can phosphorylate or dephosphorylate isocitrate dehydrogenase (IDH) on a specific serine residue. This is a regulatory mechanism which enables bacteria to bypass the Krebs cycle via the glyoxylate shunt in response to the source of carbon. When bacteria are grown on glucose, IDH is fully active and unphosphorylated, but when grown on acetate or ethanol, the activity of IDH declines drastically concomitant with its phosphorylation. The sequence is that of Isocitrate dehydrogenase kinase/phosphatase from Cupriavidus necator (strain ATCC 17699 / DSM 428 / KCTC 22496 / NCIMB 10442 / H16 / Stanier 337) (Ralstonia eutropha).